The sequence spans 460 residues: V-type ATP synthase beta chain 2 (460 aa).

The protein belongs to the ATPase alpha/beta chains family.

Functionally, produces ATP from ADP in the presence of a proton gradient across the membrane. The V-type beta chain is a regulatory subunit. This Clostridium tetani (strain Massachusetts / E88) protein is V-type ATP synthase beta chain 2.